We begin with the raw amino-acid sequence, 180 residues long: UPF0303 protein PSEEN3311 (180 aa).

It belongs to the UPF0303 family.

The polypeptide is UPF0303 protein PSEEN3311 (Pseudomonas entomophila (strain L48)).